We begin with the raw amino-acid sequence, 1389 residues long: DNA-directed RNA polymerase subunit beta'' (1389 aa).

The Zn(2+) site is built by Cys220, Cys290, Cys297, and Cys300.

It belongs to the RNA polymerase beta' chain family. RpoC2 subfamily. In plastids the minimal PEP RNA polymerase catalytic core is composed of four subunits: alpha, beta, beta', and beta''. When a (nuclear-encoded) sigma factor is associated with the core the holoenzyme is formed, which can initiate transcription. It depends on Zn(2+) as a cofactor.

Its subcellular location is the plastid. It is found in the chloroplast. It catalyses the reaction RNA(n) + a ribonucleoside 5'-triphosphate = RNA(n+1) + diphosphate. Functionally, DNA-dependent RNA polymerase catalyzes the transcription of DNA into RNA using the four ribonucleoside triphosphates as substrates. In Chloranthus spicatus (Chulantree), this protein is DNA-directed RNA polymerase subunit beta''.